The sequence spans 322 residues: uncharacterized protein (322 aa).

The span at 1–17 (MASMAAAIAASRSAVMS) shows a compositional bias: low complexity. The disordered stretch occupies residues 1-22 (MASMAAAIAASRSAVMSGNRPL). Residue A2 is modified to N-acetylalanine. The residue at position 37 (S37) is a Phosphoserine. A disordered region spans residues 81–104 (AAAADAGDVRDPARFPGLRGPTGQ). S130 is subject to Phosphoserine. 2 stretches are compositionally biased toward polar residues: residues 142–153 (QEPSAATVTSDA) and 161–177 (QGTQGSKPAQSSRSSSL). Residues 142 to 301 (QEPSAATVTS…DDDALFSEPA (160 aa)) are disordered. Position 176 is a phosphoserine (S176). Residues 183 to 203 (ARKEEEAPFWKINAERSREGP) show a composition bias toward basic and acidic residues. Over residues 245-255 (QEQQTLPSVSA) the composition is skewed to polar residues.

It is found in the cytoplasm. This is an uncharacterized protein from Mus musculus (Mouse).